Here is a 201-residue protein sequence, read N- to C-terminus: Probable molybdenum cofactor guanylyltransferase (201 aa).

GTP contacts are provided by residues 20–22 (LAG), K32, D77, and D106. Position 106 (D106) interacts with Mg(2+).

The protein belongs to the MobA family. The cofactor is Mg(2+).

Its subcellular location is the cytoplasm. The enzyme catalyses Mo-molybdopterin + GTP + H(+) = Mo-molybdopterin guanine dinucleotide + diphosphate. Transfers a GMP moiety from GTP to Mo-molybdopterin (Mo-MPT) cofactor (Moco or molybdenum cofactor) to form Mo-molybdopterin guanine dinucleotide (Mo-MGD) cofactor. The polypeptide is Probable molybdenum cofactor guanylyltransferase (Aquifex aeolicus (strain VF5)).